Reading from the N-terminus, the 165-residue chain is Peptide methionine sulfoxide reductase MsrA (165 aa).

C11 is a catalytic residue.

Belongs to the MsrA Met sulfoxide reductase family.

It catalyses the reaction L-methionyl-[protein] + [thioredoxin]-disulfide + H2O = L-methionyl-(S)-S-oxide-[protein] + [thioredoxin]-dithiol. The catalysed reaction is [thioredoxin]-disulfide + L-methionine + H2O = L-methionine (S)-S-oxide + [thioredoxin]-dithiol. Has an important function as a repair enzyme for proteins that have been inactivated by oxidation. Catalyzes the reversible oxidation-reduction of methionine sulfoxide in proteins to methionine. The protein is Peptide methionine sulfoxide reductase MsrA of Ureaplasma urealyticum serovar 10 (strain ATCC 33699 / Western).